Here is a 332-residue protein sequence, read N- to C-terminus: ALQYKGVDWSSVMVEERAGVRYKNVNGQEKPLEYILAENGVNMVRQRVWVNPWDGNYNLDYNIQLARRAKAAGLGLYINFHYSDTWADPAHQTTPAGWPSDINNLAWKLYNYTLDSMNRFADAGIQVDIVSIGNEITQGLLWPLGKTNNWYNIARLLHSAAWGVKDSRLNPKPKIMVHLDNGWNWDTQNWWYTNVLSQGPFEMSDFDMMGVSFYPFYSASATLDSLRRSLNNMVSRWGKEVAVVETNWPTSCPYPRYQFPADVRNVPFSAAGQTQYIQSVANVVSSVSKGVGLFYWEPAWIHNANLGSSCADNTMFTPSGQALSSLSVFHRI.

Residue Asn111 is glycosylated (N-linked (GlcNAc...) asparagine). Glu135 serves as the catalytic Proton donor. The active-site Nucleophile is the Glu245.

It belongs to the glycosyl hydrolase 53 family.

The enzyme catalyses The enzyme specifically hydrolyzes (1-&gt;4)-beta-D-galactosidic linkages in type I arabinogalactans.. The chain is Arabinogalactan endo-beta-1,4-galactanase from Humicola insolens (Soft-rot fungus).